A 182-amino-acid polypeptide reads, in one-letter code: Small heat shock protein hspG1 (182 aa).

Positions 43 to 182 (IKRIDIIPSM…SNSSFKININ (140 aa)) constitute a sHSP domain.

This sequence belongs to the small heat shock protein (HSP20) family.

In Dictyostelium discoideum (Social amoeba), this protein is Small heat shock protein hspG1 (hspG1).